The chain runs to 172 residues: Ribosome maturation factor RimM (172 aa).

A PRC barrel domain is found at 94-167; that stretch reads EGSYYYKDII…VAHVIVPEGL (74 aa).

This sequence belongs to the RimM family. In terms of assembly, binds ribosomal protein uS19.

It localises to the cytoplasm. Functionally, an accessory protein needed during the final step in the assembly of 30S ribosomal subunit, possibly for assembly of the head region. Essential for efficient processing of 16S rRNA. May be needed both before and after RbfA during the maturation of 16S rRNA. It has affinity for free ribosomal 30S subunits but not for 70S ribosomes. The sequence is that of Ribosome maturation factor RimM from Lacticaseibacillus paracasei (strain ATCC 334 / BCRC 17002 / CCUG 31169 / CIP 107868 / KCTC 3260 / NRRL B-441) (Lactobacillus paracasei).